The chain runs to 323 residues: GDSL esterase/lipase At5g03980 (323 aa).

A signal peptide spans 1–21; the sequence is MSTTKALSLLVFILFVSLVHS. The active-site Nucleophile is the Ser36. Asn77 carries an N-linked (GlcNAc...) asparagine glycan. Active-site residues include Asp294 and His297.

Belongs to the 'GDSL' lipolytic enzyme family.

It is found in the secreted. The chain is GDSL esterase/lipase At5g03980 from Arabidopsis thaliana (Mouse-ear cress).